Reading from the N-terminus, the 325-residue chain is Large ribosomal subunit protein uL18 (325 aa).

Residues 247-300 (IRIPPSRRNPRRRSPRSGGRWPSCRSPPARRRSRSTRPTSWPRSRPTSKPKRPR) are disordered. 2 stretches are compositionally biased toward low complexity: residues 262 to 273 (RSGGRWPSCRSP) and 282 to 291 (TRPTSWPRSR).

It belongs to the universal ribosomal protein uL18 family. As to quaternary structure, component of the large ribosomal subunit (LSU).

It localises to the cytoplasm. The protein localises to the nucleus. Functionally, component of the ribosome, a large ribonucleoprotein complex responsible for the synthesis of proteins in the cell. The small ribosomal subunit (SSU) binds messenger RNAs (mRNAs) and translates the encoded message by selecting cognate aminoacyl-transfer RNA (tRNA) molecules. The large subunit (LSU) contains the ribosomal catalytic site termed the peptidyl transferase center (PTC), which catalyzes the formation of peptide bonds, thereby polymerizing the amino acids delivered by tRNAs into a polypeptide chain. The nascent polypeptides leave the ribosome through a tunnel in the LSU and interact with protein factors that function in enzymatic processing, targeting, and the membrane insertion of nascent chains at the exit of the ribosomal tunnel. This is Large ribosomal subunit protein uL18 (RpL5) from Anopheles gambiae (African malaria mosquito).